The chain runs to 347 residues: Olfactory receptor 1L6 (347 aa).

Topologically, residues 1 to 62 (MSYFYRLKLM…GLSSNPQLQK (62 aa)) are extracellular. Asparagine 41 is a glycosylation site (N-linked (GlcNAc...) asparagine). A helical membrane pass occupies residues 63–86 (PLFAIFLIMYLLAAVGNVLIIPAI). Topologically, residues 87–94 (YSDPRLHT) are cytoplasmic. Residues 95–116 (PMYFFLSNLSFMDICFTTVIVP) traverse the membrane as a helical segment. Over 117–137 (KMLVNFLSETKVISYVGCLAQ) the chain is Extracellular. The cysteines at positions 134 and 226 are disulfide-linked. The chain crosses the membrane as a helical span at residues 138–157 (MYFFMAFGNTDSYLLASMAI). Residues 158–176 (DRLVAICNPLHYDVVMKPR) are Cytoplasmic-facing. The helical transmembrane segment at 177–195 (HCLLMLLGSCSISHLHSLF) threads the bilayer. Over 196 to 233 (RVLLMSRLSFCASHIIKHFFCDTQPVLKLSCSDTSSSQ) the chain is Extracellular. Residues 234–256 (MVVMTETLAVIVTPFLCIIFSYL) form a helical membrane-spanning segment. Residues 257-273 (RIMVTVLRIPSAAGKWK) are Cytoplasmic-facing. The chain crosses the membrane as a helical span at residues 274-296 (AFSTCGSHLTAVALFYGSIIYVY). Residues 297–309 (FRPLSMYSVVRDR) lie on the Extracellular side of the membrane. Residues 310–329 (VATVMYTVVTPMLNPFIYSL) traverse the membrane as a helical segment. The Cytoplasmic segment spans residues 330–347 (RNKDMKRGLKKLQDRIYR).

This sequence belongs to the G-protein coupled receptor 1 family.

The protein localises to the cell membrane. Odorant receptor. The sequence is that of Olfactory receptor 1L6 (OR1L6) from Homo sapiens (Human).